The following is a 78-amino-acid chain: Large ribosomal subunit protein bL28 (78 aa).

The segment at 1–25 (MSRVCQVTGKRPAVGNNRSHAKNAT) is disordered.

It belongs to the bacterial ribosomal protein bL28 family.

In Aliivibrio fischeri (strain ATCC 700601 / ES114) (Vibrio fischeri), this protein is Large ribosomal subunit protein bL28.